A 191-amino-acid polypeptide reads, in one-letter code: Lipoprotein signal peptidase (191 aa).

The next 3 membrane-spanning stretches (helical) occupy residues 26 to 46 (VWFP…LKAW), 84 to 104 (AVPL…YLLW), and 110 to 130 (FLTV…IDGL). Catalysis depends on residues Asp137 and Asp163. A helical transmembrane segment spans residues 156–176 (FPIFNIADMCVVGGTILLLVA).

The protein belongs to the peptidase A8 family.

Its subcellular location is the cell membrane. The enzyme catalyses Release of signal peptides from bacterial membrane prolipoproteins. Hydrolyzes -Xaa-Yaa-Zaa-|-(S,diacylglyceryl)Cys-, in which Xaa is hydrophobic (preferably Leu), and Yaa (Ala or Ser) and Zaa (Gly or Ala) have small, neutral side chains.. It functions in the pathway protein modification; lipoprotein biosynthesis (signal peptide cleavage). Its function is as follows. This protein specifically catalyzes the removal of signal peptides from prolipoproteins. The chain is Lipoprotein signal peptidase from Deinococcus radiodurans (strain ATCC 13939 / DSM 20539 / JCM 16871 / CCUG 27074 / LMG 4051 / NBRC 15346 / NCIMB 9279 / VKM B-1422 / R1).